The chain runs to 727 residues: Catalase-peroxidase (727 aa).

A disordered region spans residues 1-21; the sequence is MDAKVEDNIAGKCPMGHGRGP. Positions 95–217 form a cross-link, tryptophyl-tyrosyl-methioninium (Trp-Tyr) (with M-243); that stretch reads WHAAGTYRIT…LGAVQMGLIY (123 aa). Catalysis depends on His96, which acts as the Proton acceptor. The segment at residues 217-243 is a cross-link (tryptophyl-tyrosyl-methioninium (Tyr-Met) (with W-95)); that stretch reads YVNPEGPNGNPDPLASARDIRETFARM. His258 provides a ligand contact to heme b.

Belongs to the peroxidase family. Peroxidase/catalase subfamily. As to quaternary structure, homodimer or homotetramer. Requires heme b as cofactor. In terms of processing, formation of the three residue Trp-Tyr-Met cross-link is important for the catalase, but not the peroxidase activity of the enzyme.

It catalyses the reaction H2O2 + AH2 = A + 2 H2O. The catalysed reaction is 2 H2O2 = O2 + 2 H2O. In terms of biological role, bifunctional enzyme with both catalase and broad-spectrum peroxidase activity. Important for stationary phase survival. The polypeptide is Catalase-peroxidase (Caulobacter vibrioides (strain ATCC 19089 / CIP 103742 / CB 15) (Caulobacter crescentus)).